The following is a 336-amino-acid chain: Ribose-phosphate pyrophosphokinase (336 aa).

ATP contacts are provided by residues 43–45 (DQE) and 102–103 (RQ). Residues His136 and Asp178 each coordinate Mg(2+). Lys201 is a catalytic residue. Residues Arg203, Asp227, and 231–235 (DTAGT) each bind D-ribose 5-phosphate.

It belongs to the ribose-phosphate pyrophosphokinase family. Class I subfamily. As to quaternary structure, homohexamer. Mg(2+) is required as a cofactor.

The protein localises to the cytoplasm. It carries out the reaction D-ribose 5-phosphate + ATP = 5-phospho-alpha-D-ribose 1-diphosphate + AMP + H(+). Its pathway is metabolic intermediate biosynthesis; 5-phospho-alpha-D-ribose 1-diphosphate biosynthesis; 5-phospho-alpha-D-ribose 1-diphosphate from D-ribose 5-phosphate (route I): step 1/1. Functionally, involved in the biosynthesis of the central metabolite phospho-alpha-D-ribosyl-1-pyrophosphate (PRPP) via the transfer of pyrophosphoryl group from ATP to 1-hydroxyl of ribose-5-phosphate (Rib-5-P). In Cereibacter sphaeroides (strain KD131 / KCTC 12085) (Rhodobacter sphaeroides), this protein is Ribose-phosphate pyrophosphokinase.